A 126-amino-acid chain; its full sequence is Large ribosomal subunit protein bL12 (126 aa).

Residues 107–116 (EDAEKAKSQL) are compositionally biased toward basic and acidic residues. Residues 107-126 (EDAEKAKSQLEEAGATVELK) form a disordered region.

The protein belongs to the bacterial ribosomal protein bL12 family. As to quaternary structure, homodimer. Part of the ribosomal stalk of the 50S ribosomal subunit. Forms a multimeric L10(L12)X complex, where L10 forms an elongated spine to which 2 to 4 L12 dimers bind in a sequential fashion. Binds GTP-bound translation factors.

Functionally, forms part of the ribosomal stalk which helps the ribosome interact with GTP-bound translation factors. Is thus essential for accurate translation. The protein is Large ribosomal subunit protein bL12 of Bifidobacterium adolescentis (strain ATCC 15703 / DSM 20083 / NCTC 11814 / E194a).